The primary structure comprises 706 residues: Zinc finger and BTB domain-containing protein 17 (706 aa).

A BTB domain is found at 1-12 (LKSLTVLAESPV). The segment at 32–194 (TAARVTQGDS…LLRSGTYSDR (163 aa)) is disordered. The span at 67-78 (EPAEQPDAKEGP) shows a compositional bias: basic and acidic residues. The segment covering 90 to 106 (AAEASPAAVSPSRPQPA) has biased composition (low complexity). Positions 134–148 (GKEEEGEAMVEDEEE) are enriched in acidic residues. Residues 170–182 (SGSTDSGQENSGE) show a composition bias toward polar residues. C2H2-type zinc fingers lie at residues 205-227 (HKCEDCGKEFTHTGNFKRHIRIH), 233-255 (FSCRECNKAFSDPAACKAHEKTH), 261-283 (YGCEECGKSYRLISLLNLHKKRH), 289-311 (YRCDDCGKLFTTSGNLKRHQLVH), 317-339 (YQCDYCGRSFSDPTSKMRHLETH), 345-367 (HKCPHCDKKFNQVGNLKAHLKIH), 373-395 (LKCRECGNEFTTSGNLKRHLRIH), 401-423 (YVCVHCQRQFADPGALQAHVPIH), 427-450 (KPCQCLICGKAFTQASSLIAHVRH), 457-479 (YVCERCGKRFVQSSQLANHIRHH), 485-507 (HKCTVCNKAFVNVGDLSKHIIIH), 513-536 (FLCDKCGRGFNRVDNLRSHVKTVH), and 618-640 (YACDSCGEKFLDATSLAQHVRIH). Residues 680 to 706 (PRDSPQEAPAAPLAPVPLAGEGQAPAE) are disordered. The span at 687 to 698 (APAAPLAPVPLA) shows a compositional bias: low complexity.

This sequence belongs to the krueppel C2H2-type zinc-finger protein family.

It localises to the nucleus. Its function is as follows. Transcription factor that can function as an activator or repressor depending on its binding partners, and by targeting negative regulators of cell cycle progression. Plays a critical role in early lymphocyte development, where it is essential to prevent apoptosis in lymphoid precursors, allowing them to survive in response to IL7 and undergo proper lineage commitment. Has been shown to bind to the promoters of adenovirus major late protein and cyclin D1 and activate transcription. Required for early embryonic development during gastrulation. Represses RB1 transcription. In Gallus gallus (Chicken), this protein is Zinc finger and BTB domain-containing protein 17 (ZBTB17).